The chain runs to 550 residues: Dihydroxy-acid dehydratase (550 aa).

Asp-78 provides a ligand contact to Mg(2+). A [2Fe-2S] cluster-binding site is contributed by Cys-119. Mg(2+)-binding residues include Asp-120 and Lys-121. N6-carboxylysine is present on Lys-121. Cys-192 contacts [2Fe-2S] cluster. Position 440 (Glu-440) interacts with Mg(2+). Residue Ser-466 is the Proton acceptor of the active site.

Belongs to the IlvD/Edd family. As to quaternary structure, homodimer. [2Fe-2S] cluster serves as cofactor. The cofactor is Mg(2+).

It carries out the reaction (2R)-2,3-dihydroxy-3-methylbutanoate = 3-methyl-2-oxobutanoate + H2O. The catalysed reaction is (2R,3R)-2,3-dihydroxy-3-methylpentanoate = (S)-3-methyl-2-oxopentanoate + H2O. It functions in the pathway amino-acid biosynthesis; L-isoleucine biosynthesis; L-isoleucine from 2-oxobutanoate: step 3/4. It participates in amino-acid biosynthesis; L-valine biosynthesis; L-valine from pyruvate: step 3/4. In terms of biological role, functions in the biosynthesis of branched-chain amino acids. Catalyzes the dehydration of (2R,3R)-2,3-dihydroxy-3-methylpentanoate (2,3-dihydroxy-3-methylvalerate) into 2-oxo-3-methylpentanoate (2-oxo-3-methylvalerate) and of (2R)-2,3-dihydroxy-3-methylbutanoate (2,3-dihydroxyisovalerate) into 2-oxo-3-methylbutanoate (2-oxoisovalerate), the penultimate precursor to L-isoleucine and L-valine, respectively. The polypeptide is Dihydroxy-acid dehydratase (Thermodesulfovibrio yellowstonii (strain ATCC 51303 / DSM 11347 / YP87)).